Consider the following 100-residue polypeptide: Small ribosomal subunit protein uS14c (100 aa).

Belongs to the universal ribosomal protein uS14 family. In terms of assembly, part of the 30S ribosomal subunit.

Its subcellular location is the plastid. It is found in the chloroplast. Binds 16S rRNA, required for the assembly of 30S particles. In Anthoceros angustus (Hornwort), this protein is Small ribosomal subunit protein uS14c.